The primary structure comprises 1062 residues: Integrin alpha-8 (1062 aa).

Positions 1–35 (MSAGTHCGPPGNRAPPFARLCCVSAALGMLWSPAC) are cleaved as a signal peptide. Residues 36 to 1010 (LAFNLDVDKL…ATPNVSFSIP (975 aa)) lie on the Extracellular side of the membrane. FG-GAP repeat units lie at residues 41–104 (DVDK…RSAQ), 121–182 (NGTK…AYAE), 187–239 (RNSN…IANY), 252–305 (KQTD…STDM), 306–371 (TFIQ…LLFQ), 372–430 (DPQV…GLHS), and 434–497 (QVLQ…LHPM). N80 carries an N-linked (GlcNAc...) asparagine glycan. C95 and C105 are joined by a disulfide. Residue N121 is glycosylated (N-linked (GlcNAc...) asparagine). A disulfide bridge links C149 with C170. The N-linked (GlcNAc...) asparagine glycan is linked to N176. A disulfide bridge connects residues C186 and C199. N238 carries an N-linked (GlcNAc...) asparagine glycan. 4 residues coordinate Ca(2+): E274, T276, D278, and E282. N-linked (GlcNAc...) asparagine glycans are attached at residues N301 and N310. 9 residues coordinate Ca(2+): D328, N330, D332, D336, D394, N396, D398, Y400, and D402. The Cell attachment site signature appears at 454–456 (RGD). Ca(2+) is bound by residues D458, D460, N462, Y464, and D466. A glycan (N-linked (GlcNAc...) asparagine) is linked at N503. 2 disulfide bridges follow: C506–C517 and C523–C579. Residues N600 and N604 are each glycosylated (N-linked (GlcNAc...) asparagine). Cystine bridges form between C640–C646 and C712–C725. N-linked (GlcNAc...) asparagine glycosylation is found at N718, N736, N752, N779, N895, and N922. 2 disulfide bridges follow: C866-C923 and C928-C933. N1004 carries an N-linked (GlcNAc...) asparagine glycan. A helical membrane pass occupies residues 1011 to 1031 (LWVIILAILLGLLVLAILTLA). At 1032-1062 (LWKCGFFDRARPPQDEMTDREQLTSDKTPEA) the chain is on the cytoplasmic side.

This sequence belongs to the integrin alpha chain family. In terms of assembly, heterodimer of an alpha and a beta subunit. The alpha subunit is composed of a heavy and a light chain linked by a disulfide bond. Alpha-8 associates with beta-1. In brain, expressed in deep cortex, hippocampal CA1, basolateral amygdala and striatum. In kidney, expressed in glomerular mesengium (at protein level).

The protein resides in the membrane. It localises to the cell membrane. Integrin alpha-8/beta-1 functions in the genesis of kidney and probably of other organs by regulating the recruitment of mesenchymal cells into epithelial structures. It recognizes the sequence R-G-D in a wide array of ligands including TNC, FN1, SPP1 TGFB1, TGFB3 and VTN. NPNT is probably its functional ligand in kidney genesis. Neuronal receptor for TNC it mediates cell-cell interactions and regulates neurite outgrowth of sensory and motor neurons. In Mus musculus (Mouse), this protein is Integrin alpha-8 (Itga8).